The chain runs to 380 residues: MRNCKMARVASVLGLVMLSVALLNLSLISYVSLKKENIFATPKYASPGAPRMYMFHAGYRSQFALKFLDPSFVPITNSLTQELQEKPSKWTFNRTAFLHQRQEILQHVDVIKNFSLTKNSVRIGQLMHYDYSSHKYVFSISNNFRSLLPDVSPIMNKHYNICAVVGNSGILTGSQCGQEIDKSDFVFRCNFAPTEAFQRDVGRKTNLTTFNPSILEKYYNNLLTIQDRNNFFLSLKKLDGAILWIPAFFFHTSATVTRTLVDFFVEHRGQLKVQLAWPGNIMQHVNRYWKNKHLSPKRLSTGILMYTLASAICEEIHLYGFWPFGFDPNTREDLPYHYYDKKGTKFTTKWQESHQLPAEFQLLYRMHGEGLTKLTLSHCA.

Topologically, residues 1-9 (MRNCKMARV) are cytoplasmic. Residues 10 to 33 (ASVLGLVMLSVALLNLSLISYVSL) traverse the membrane as a helical; Signal-anchor for type II membrane protein segment. At 34 to 380 (KKENIFATPK…LTKLTLSHCA (347 aa)) the chain is on the lumenal side. N93 and N113 each carry an N-linked (GlcNAc...) asparagine glycan. 2 disulfides stabilise this stretch: C162–C313 and C176–C379. Residues N167 and N190 each coordinate CMP-N-acetyl-beta-neuraminate. A glycan (N-linked (GlcNAc...) asparagine) is linked at N206. CMP-N-acetyl-beta-neuraminate is bound by residues S300, T301, G302, W322, Y336, and H337. The active-site Proton donor/acceptor is the H354.

The protein belongs to the glycosyltransferase 29 family. In terms of assembly, homodimer. Post-translationally, autopolysialylated.

It localises to the golgi apparatus membrane. The catalysed reaction is [N-acetyl-alpha-D-neuraminosyl-(2-&gt;8)](n) + CMP-N-acetyl-beta-neuraminate = [N-acetyl-alpha-D-neuraminosyl-(2-&gt;8)](n+1) + CMP + H(+). It catalyses the reaction alpha-Neu5Ac-(2-&gt;3)-beta-D-Gal-(1-&gt;4)-6S-D-GlcNAc + CMP-N-acetyl-beta-neuraminate = alpha-Neu5Ac-(2-&gt;8)-alpha-Neu5Ac-(2-&gt;3)-beta-D-Gal-(1-&gt;4)-6S-D-GlcNAc + CMP + H(+). The enzyme catalyses a ganglioside GM3 (d18:1(4E)) + CMP-N-acetyl-beta-neuraminate = a ganglioside GD3 (d18:1(4E)) + CMP + H(+). It carries out the reaction a ganglioside GM3 + CMP-N-acetyl-beta-neuraminate = a ganglioside GD3 + CMP + H(+). The catalysed reaction is an N-acetyl-alpha-neuraminyl-(2-&gt;3)-beta-D-galactosyl derivative + CMP-N-acetyl-beta-neuraminate = an N-acetyl-alpha-neuraminyl-(2-&gt;8)-N-acetyl-alpha-neuraminyl-(2-&gt;3)-beta-D-galactosyl derivative + CMP + H(+). It catalyses the reaction an N-acetyl-alpha-neuraminyl-(2-&gt;3)-beta-D-galactosyl-(1-&gt;4)-N-acetyl-beta-D-glucosaminyl derivative + CMP-N-acetyl-beta-neuraminate = an alpha-Neu5Ac-(2-&gt;8)-alpha-Neu5Ac-(2-&gt;3)-beta-D-Gal-(1-&gt;4)-beta-D-GlcNAc derivative + CMP + H(+). It participates in protein modification; protein glycosylation. Catalyzes the transfer of sialic acid from a CMP-linked sialic acid donor onto a terminal alpha-2,3-, alpha-2,6-, or alpha-2,8-linked sialic acid of an acceptor, such as N-linked oligosaccharides of glycoproteins and glycolipids through alpha-2,8-linkages. Forms oligosialic and polysialic acid on various sialylated N-acetyllactosamine oligosaccharides of glycoproteins, including FETUB N-glycans, a2-HS-glycoprotein (AHSG) and alpha 2,3-sialylated glycosphingolipids, such as alpha 2,3-sialylparagloboside and ganglioside GM3 and to a lesser extent NCAM1 N-glycans. However, it is much more specific to N-linked oligosaccharides of glycoproteins than glycosphingolipids. 2,3-sialylparagloboside serves as the best acceptor substrate among the glycolipids. alpha-Neu5Ac-(2-&gt;8)-alpha-Neu5Ac-(2-&gt;3)-beta-D-Gal-(1-&gt;4)-6S-D-GlcNAc and monosialyl and disialyl N-acetyllactosamines are the best acceptor substrates among glycoproteins. May plays critical role in the striatum by mediating the formation of disialylated and trisialylated terminal glycotopes on N- and O-glycans of specific striatal proteins, regulating their distribution in lipid rafts, affecting their interaction with other binding partners, and subsequently modulating striatal functions. This chain is Alpha-N-acetylneuraminate alpha-2,8-sialyltransferase ST8SIA3, found in Pan troglodytes (Chimpanzee).